The sequence spans 139 residues: 3-hydroxyacyl-[acyl-carrier-protein] dehydratase FabZ (139 aa).

His46 is an active-site residue.

It belongs to the thioester dehydratase family. FabZ subfamily.

The protein resides in the cytoplasm. The catalysed reaction is a (3R)-hydroxyacyl-[ACP] = a (2E)-enoyl-[ACP] + H2O. In terms of biological role, involved in unsaturated fatty acids biosynthesis. Catalyzes the dehydration of short chain beta-hydroxyacyl-ACPs and long chain saturated and unsaturated beta-hydroxyacyl-ACPs. This Petrotoga mobilis (strain DSM 10674 / SJ95) protein is 3-hydroxyacyl-[acyl-carrier-protein] dehydratase FabZ.